The following is a 592-amino-acid chain: Putative RING finger protein ORF9 (592 aa).

The RING-type zinc-finger motif lies at 12–49; sequence CCICLEEDIERVDTIPCQHTVCRPCYLKPMINKCPVCR. Residues 414-441 are a coiled coil; the sequence is WELIKREELLQRRYKREEQNLKYTSNRL.

This Ostreid herpesvirus 1 (isolate France) (OsHV-1) protein is Putative RING finger protein ORF9.